A 282-amino-acid polypeptide reads, in one-letter code: Lipoyl synthase (282 aa).

Positions 37, 42, 48, 63, 67, 70, and 275 each coordinate [4Fe-4S] cluster. A Radical SAM core domain is found at 49 to 264 (WSRGTATFMI…RLVGIEKGFR (216 aa)).

Belongs to the radical SAM superfamily. Lipoyl synthase family. [4Fe-4S] cluster serves as cofactor.

Its subcellular location is the cytoplasm. The catalysed reaction is [[Fe-S] cluster scaffold protein carrying a second [4Fe-4S](2+) cluster] + N(6)-octanoyl-L-lysyl-[protein] + 2 oxidized [2Fe-2S]-[ferredoxin] + 2 S-adenosyl-L-methionine + 4 H(+) = [[Fe-S] cluster scaffold protein] + N(6)-[(R)-dihydrolipoyl]-L-lysyl-[protein] + 4 Fe(3+) + 2 hydrogen sulfide + 2 5'-deoxyadenosine + 2 L-methionine + 2 reduced [2Fe-2S]-[ferredoxin]. It functions in the pathway protein modification; protein lipoylation via endogenous pathway; protein N(6)-(lipoyl)lysine from octanoyl-[acyl-carrier-protein]: step 2/2. Its function is as follows. Catalyzes the radical-mediated insertion of two sulfur atoms into the C-6 and C-8 positions of the octanoyl moiety bound to the lipoyl domains of lipoate-dependent enzymes, thereby converting the octanoylated domains into lipoylated derivatives. This chain is Lipoyl synthase, found in Porphyromonas gingivalis (strain ATCC BAA-308 / W83).